The primary structure comprises 219 residues: Histone H1.11R (219 aa).

2 stretches are compositionally biased toward low complexity: residues 1-20 and 28-40; these read MAETAPAAAPAAAPAPAAKA and AAGGAKARKPAGP. Disordered regions lie at residues 1-42 and 89-219; these read MAET…GPSV and LVSK…AKKK. The 74-residue stretch at 38–111 folds into the H15 domain; the sequence is AGPSVTELIT…GASGSFRLSK (74 aa). Basic residues-rich tracts occupy residues 121-135, 143-160, 168-183, and 192-219; these read PKKKASAAKPKKAAA, KKPKKAVAVKKSPKKAKK, KSVKSPKKAAKPKKAV, and KAVKPKAAKPKAAKPKAAKAKKAAAKKK.

The protein belongs to the histone H1/H5 family.

It is found in the nucleus. It localises to the chromosome. Its function is as follows. Histones H1 are necessary for the condensation of nucleosome chains into higher-order structures. The chain is Histone H1.11R from Gallus gallus (Chicken).